The following is a 711-amino-acid chain: Polyribonucleotide nucleotidyltransferase (711 aa).

Residues Asp-486 and Asp-492 each contribute to the Mg(2+) site. The KH domain maps to 553–612 (PRIHTIKINPDKIKDVIGKGGSVIRALTEETGTTIEIEDDGTVKIAATDGEKAKHAIRRI). One can recognise an S1 motif domain in the interval 622 to 690 (GRVYTGKVTR…RQGRIRLSIK (69 aa)). Positions 689-711 (IKEATEQSQPAAAPEAPAAEQGE) are disordered. Residues 694 to 711 (EQSQPAAAPEAPAAEQGE) show a composition bias toward low complexity.

The protein belongs to the polyribonucleotide nucleotidyltransferase family. In terms of assembly, component of the RNA degradosome, which is a multiprotein complex involved in RNA processing and mRNA degradation. Mg(2+) serves as cofactor.

The protein resides in the cytoplasm. The catalysed reaction is RNA(n+1) + phosphate = RNA(n) + a ribonucleoside 5'-diphosphate. In terms of biological role, involved in mRNA degradation. Catalyzes the phosphorolysis of single-stranded polyribonucleotides processively in the 3'- to 5'-direction. This Escherichia coli (strain SE11) protein is Polyribonucleotide nucleotidyltransferase.